The sequence spans 354 residues: Fructose-bisphosphate aldolase (354 aa).

Ser61 contributes to the D-glyceraldehyde 3-phosphate binding site. The active-site Proton donor is Asp104. Residues His105, Asp139, Glu169, and His221 each coordinate Zn(2+). Residue Gly222 participates in dihydroxyacetone phosphate binding. Residue His260 participates in Zn(2+) binding. Dihydroxyacetone phosphate contacts are provided by residues 261 to 263 (GGS) and 282 to 285 (NIDT).

The protein belongs to the class II fructose-bisphosphate aldolase family. Homodimer. Requires Zn(2+) as cofactor.

The catalysed reaction is beta-D-fructose 1,6-bisphosphate = D-glyceraldehyde 3-phosphate + dihydroxyacetone phosphate. It participates in carbohydrate degradation; glycolysis; D-glyceraldehyde 3-phosphate and glycerone phosphate from D-glucose: step 4/4. In terms of biological role, catalyzes the aldol condensation of dihydroxyacetone phosphate (DHAP or glycerone-phosphate) with glyceraldehyde 3-phosphate (G3P) to form fructose 1,6-bisphosphate (FBP) in gluconeogenesis and the reverse reaction in glycolysis. The polypeptide is Fructose-bisphosphate aldolase (fba) (Campylobacter jejuni subsp. jejuni serotype O:23/36 (strain 81-176)).